Reading from the N-terminus, the 154-residue chain is Deoxyuridine 5'-triphosphate nucleotidohydrolase (154 aa).

Substrate-binding positions include Arg-64–Gly-66, Asn-77, Thr-81–Asp-83, and Lys-91.

The protein belongs to the dUTPase family. In terms of assembly, homotrimer. Mg(2+) serves as cofactor.

The catalysed reaction is dUTP + H2O = dUMP + diphosphate + H(+). The protein operates within pyrimidine metabolism; dUMP biosynthesis; dUMP from dCTP (dUTP route): step 2/2. In terms of biological role, this enzyme is involved in nucleotide metabolism: it produces dUMP, the immediate precursor of thymidine nucleotides and it decreases the intracellular concentration of dUTP so that uracil cannot be incorporated into DNA. The protein is Deoxyuridine 5'-triphosphate nucleotidohydrolase of Mycobacterium avium (strain 104).